We begin with the raw amino-acid sequence, 329 residues long: GTP 3',8-cyclase (329 aa).

Residues 1-229 (MNQIDYLRIS…EGQVRGNGPA (229 aa)) form the Radical SAM core domain. Residue R8 coordinates GTP. Residues C15 and C19 each coordinate [4Fe-4S] cluster. S-adenosyl-L-methionine is bound at residue Y21. C22 provides a ligand contact to [4Fe-4S] cluster. R60 lines the GTP pocket. S-adenosyl-L-methionine is bound at residue G64. Position 91 (T91) interacts with GTP. Position 115 (S115) interacts with S-adenosyl-L-methionine. K155 serves as a coordination point for GTP. Residue M189 coordinates S-adenosyl-L-methionine. C252 and C255 together coordinate [4Fe-4S] cluster. 257-259 (RLR) contacts GTP. C269 lines the [4Fe-4S] cluster pocket.

Belongs to the radical SAM superfamily. MoaA family. As to quaternary structure, monomer and homodimer. Requires [4Fe-4S] cluster as cofactor.

It carries out the reaction GTP + AH2 + S-adenosyl-L-methionine = (8S)-3',8-cyclo-7,8-dihydroguanosine 5'-triphosphate + 5'-deoxyadenosine + L-methionine + A + H(+). Its pathway is cofactor biosynthesis; molybdopterin biosynthesis. In terms of biological role, catalyzes the cyclization of GTP to (8S)-3',8-cyclo-7,8-dihydroguanosine 5'-triphosphate. The polypeptide is GTP 3',8-cyclase (Microcystis aeruginosa (strain NIES-843 / IAM M-2473)).